A 414-amino-acid polypeptide reads, in one-letter code: Transforming growth factor beta-2 proprotein (414 aa).

The signal sequence occupies residues 1–20 (MHYCVLSTFLLLHLVPVALS). N-linked (GlcNAc...) asparagine glycans are attached at residues N72, N140, and N241. Cystine bridges form between C309/C318, C317/C380, C346/C411, and C350/C413.

The protein belongs to the TGF-beta family. Interacts with the serine proteases, HTRA1 and HTRA3. Interacts with ASPN. Interacts with MFAP5. In terms of assembly, interacts with Transforming growth factor beta-2 (TGF-beta-2) chain; interaction is non-covalent and maintains (TGF-beta-2) in a latent state. Interacts with LRRC32/GARP; leading to regulate activation of TGF-beta-2. Interacts with NREP; the interaction results in a decrease in TGFB2 autoinduction. As to quaternary structure, transforming growth factor beta-2: Homodimer; disulfide-linked. Transforming growth factor beta-2: Interacts with TGF-beta receptors (TGFBR1 and TGFBR2), leading to signal transduction. Post-translationally, the precursor proprotein is cleaved in the Golgi apparatus to form Transforming growth factor beta-2 (TGF-beta-2) and Latency-associated peptide (LAP) chains, which remain non-covalently linked, rendering TGF-beta-2 inactive.

The protein resides in the secreted. Its subcellular location is the extracellular space. It localises to the extracellular matrix. Precursor of the Latency-associated peptide (LAP) and Transforming growth factor beta-2 (TGF-beta-2) chains, which constitute the regulatory and active subunit of TGF-beta-2, respectively. In terms of biological role, required to maintain the Transforming growth factor beta-2 (TGF-beta-2) chain in a latent state during storage in extracellular matrix. Associates non-covalently with TGF-beta-2 and regulates its activation via interaction with 'milieu molecules', such as LTBP1 and LRRC32/GARP, that control activation of TGF-beta-2. Its function is as follows. Multifunctional protein that regulates various processes such as angiogenesis and heart development. Activation into mature form follows different steps: following cleavage of the proprotein in the Golgi apparatus, Latency-associated peptide (LAP) and Transforming growth factor beta-2 (TGF-beta-2) chains remain non-covalently linked rendering TGF-beta-2 inactive during storage in extracellular matrix. At the same time, LAP chain interacts with 'milieu molecules', such as LTBP1 and LRRC32/GARP, that control activation of TGF-beta-2 and maintain it in a latent state during storage in extracellular milieus. Once activated following release of LAP, TGF-beta-2 acts by binding to TGF-beta receptors (TGFBR1 and TGFBR2), which transduce signal. In Mus musculus (Mouse), this protein is Transforming growth factor beta-2 proprotein (Tgfb2).